Here is a 593-residue protein sequence, read N- to C-terminus: ATPase family AAA domain-containing protein 3-A (593 aa).

The tract at residues 1–64 (MSWLFGLNKG…AKAARELDQS (64 aa)) is disordered. Topologically, residues 1–242 (MSWLFGLNKG…FRTFISDWDK (242 aa)) are mitochondrial intermembrane. Positions 15–27 (PGVPGFPEPPSPP) are enriched in pro residues. Basic and acidic residues-rich tracts occupy residues 33-44 (GGDKNKPKDKWS) and 53-64 (RAAKAARELDQS). Residues 52-215 (ERAAKAAREL…QIRLKAAEHR (164 aa)) are a coiled coil. Residues 243–260 (VTATVAGLTLLAVGVYTA) traverse the membrane as a helical segment. Topologically, residues 261–593 (KNATGVAGRY…LQPLLEGTQV (333 aa)) are mitochondrial matrix. An ATP-binding site is contributed by 348-355 (GPPGTGKT).

Belongs to the AAA ATPase family. As to quaternary structure, can form homooligomers. Homodimer formation at the N-terminus may be regulated by ATP and is required for the interaction with the inner surface of the mitochondrial outer membrane and correct mitochondrial homeostasis.

The protein localises to the mitochondrion inner membrane. It localises to the mitochondrion matrix. Its subcellular location is the mitochondrion nucleoid. It carries out the reaction ATP + H2O = ADP + phosphate + H(+). Essential for mitochondrial network organization, mitochondrial metabolism and cell growth at organism and cellular level. May play an important role in mitochondrial protein synthesis. May also participate in mitochondrial DNA replication. May bind to mitochondrial DNA D-loops and contribute to nucleoid stability. Required for enhanced channeling of cholesterol for hormone-dependent steroidogenesis. Involved in mitochondrial-mediated antiviral innate immunity. Required to protect mitochondria from the PERK-mediated unfolded protein response: specifically inhibits the activity of EIF2AK3/PERK at mitochondria-endoplasmic reticulum contact sites, thereby providing a safe haven for mitochondrial protein translation during endoplasmic reticulum stress. Ability to inhibit EIF2AK3/PERK is independent of its ATPase activity. Also involved in the mitochondrial DNA damage response by promoting signaling between damaged genomes and the mitochondrial membrane, leading to activation of the integrated stress response (ISR). The chain is ATPase family AAA domain-containing protein 3-A (atad3-a) from Xenopus laevis (African clawed frog).